The following is a 238-amino-acid chain: MSVLVITGTGTEVGKTVTTAAVAAVAVAAGRSVAVLKPAQTGVRPDERGDADEVARLAGAVTTLELARYPEPLAPATAARRAGLPPVGPHEVAEAAAKLAVEHDLVLVEGAGGLLVRFDDADGTLADAARLLDAPVLVVASAGLGTLNTTELTARELRRREIGFAGVVIGSWPESPDLASRCNLADLPAVAGAGLLGAIPAGAGAHSPVGFRAGAPGWLAPRLGGTWDADTFASAFVP.

ATP is bound at residue 12–17; the sequence is EVGKTV. Thr16 serves as a coordination point for Mg(2+). The active site involves Lys37. Thr41 contacts substrate. Residues Asp50, 109 to 112, 170 to 171, and 200 to 202 each bind ATP; these read EGAG, GS, and PAG. Residues Asp50 and Glu109 each contribute to the Mg(2+) site.

It belongs to the dethiobiotin synthetase family. Homodimer. It depends on Mg(2+) as a cofactor.

The protein resides in the cytoplasm. It carries out the reaction (7R,8S)-7,8-diammoniononanoate + CO2 + ATP = (4R,5S)-dethiobiotin + ADP + phosphate + 3 H(+). It functions in the pathway cofactor biosynthesis; biotin biosynthesis; biotin from 7,8-diaminononanoate: step 1/2. Functionally, catalyzes a mechanistically unusual reaction, the ATP-dependent insertion of CO2 between the N7 and N8 nitrogen atoms of 7,8-diaminopelargonic acid (DAPA, also called 7,8-diammoniononanoate) to form a ureido ring. This is ATP-dependent dethiobiotin synthetase BioD from Streptomyces avermitilis (strain ATCC 31267 / DSM 46492 / JCM 5070 / NBRC 14893 / NCIMB 12804 / NRRL 8165 / MA-4680).